A 273-amino-acid polypeptide reads, in one-letter code: Mediator of RNA polymerase II transcription subunit 18 (273 aa).

Low complexity predominate over residues 90–106 (GAQSSAASSGDPDAPMS). A disordered region spans residues 90–114 (GAQSSAASSGDPDAPMSGTDTGTNF).

Belongs to the Mediator complex subunit 18 family. Component of the Mediator complex.

Its subcellular location is the nucleus. Functionally, component of the Mediator complex, a coactivator involved in the regulated transcription of nearly all RNA polymerase II-dependent genes. Mediator functions as a bridge to convey information from gene-specific regulatory proteins to the basal RNA polymerase II transcription machinery. Mediator is recruited to promoters by direct interactions with regulatory proteins and serves as a scaffold for the assembly of a functional preinitiation complex with RNA polymerase II and the general transcription factors. The protein is Mediator of RNA polymerase II transcription subunit 18 (srb5) of Aspergillus oryzae (strain ATCC 42149 / RIB 40) (Yellow koji mold).